Reading from the N-terminus, the 904-residue chain is Protein argonaute 4A (904 aa).

2 disordered regions span residues 1–33 (MESN…KKLS) and 143–166 (KSSA…VRRP). Residues 11–21 (LPPPPPLPPNA) show a composition bias toward pro residues. Positions 144 to 156 (SSANGGSPGNDSP) are enriched in low complexity. Residues 274–388 (PVVDFLLANQ…FPIELCSLVP (115 aa)) enclose the PAZ domain. Residues 557–865 (FLLCVLAERK…AAAQVSQFIK (309 aa)) enclose the Piwi domain. The disordered stretch occupies residues 871–890 (ETSSSHGGHTSAGSAPVPEL). Over residues 872 to 885 (TSSSHGGHTSAGSA) the composition is skewed to low complexity.

This sequence belongs to the argonaute family. Ago subfamily.

Its function is as follows. Probably involved in the RNA silencing pathway. May bind to short RNAs such as microRNAs (miRNAs) or short interfering RNAs (siRNAs), and represses the translation of mRNAs which are complementary to them. In Oryza sativa subsp. japonica (Rice), this protein is Protein argonaute 4A (AGO4A).